The primary structure comprises 372 residues: 4-hydroxy-3-methylbut-2-en-1-yl diphosphate synthase (flavodoxin) (372 aa).

[4Fe-4S] cluster-binding residues include Cys270, Cys273, Cys305, and Glu312.

The protein belongs to the IspG family. The cofactor is [4Fe-4S] cluster.

The catalysed reaction is (2E)-4-hydroxy-3-methylbut-2-enyl diphosphate + oxidized [flavodoxin] + H2O + 2 H(+) = 2-C-methyl-D-erythritol 2,4-cyclic diphosphate + reduced [flavodoxin]. It participates in isoprenoid biosynthesis; isopentenyl diphosphate biosynthesis via DXP pathway; isopentenyl diphosphate from 1-deoxy-D-xylulose 5-phosphate: step 5/6. Functionally, converts 2C-methyl-D-erythritol 2,4-cyclodiphosphate (ME-2,4cPP) into 1-hydroxy-2-methyl-2-(E)-butenyl 4-diphosphate. This Shewanella amazonensis (strain ATCC BAA-1098 / SB2B) protein is 4-hydroxy-3-methylbut-2-en-1-yl diphosphate synthase (flavodoxin).